Consider the following 279-residue polypeptide: DegV domain-containing protein CA_C0701 (279 aa).

One can recognise a DegV domain in the interval 4–277 (IKIVTDSTCD…TKACGVFFIE (274 aa)). Hexadecanoate-binding residues include threonine 62 and serine 94.

May bind long-chain fatty acids, such as palmitate, and may play a role in lipid transport or fatty acid metabolism. The polypeptide is DegV domain-containing protein CA_C0701 (Clostridium acetobutylicum (strain ATCC 824 / DSM 792 / JCM 1419 / IAM 19013 / LMG 5710 / NBRC 13948 / NRRL B-527 / VKM B-1787 / 2291 / W)).